The primary structure comprises 152 residues: Ubiquitin-conjugating enzyme E2 N (152 aa).

The 147-residue stretch at 3-149 (GLPRRIIKET…ARAWTRLYAM (147 aa)) folds into the UBC core domain. Lys82 is subject to N6-acetyllysine. The Glycyl thioester intermediate role is filled by Cys87. Lys92 participates in a covalent cross-link: Glycyl lysine isopeptide (Lys-Gly) (interchain with G-Cter in ISG15).

The protein belongs to the ubiquitin-conjugating enzyme family. Heterodimer with UBE2V2. Interacts (UBE2V2-UBE2N heterodimer) with the E3 ligase STUB1 (via the U-box domain); the complex has a specific 'Lys-63'-linked polyubiquitination activity. Interacts with RNF8 and RNF168. Interacts with RNF11. Interacts with the E3 ligases, HLTF and SHPRH; the interactions promote the 'Lys-63'-linked polyubiquitination of PCNA upon genotoxic stress and lead to DNA repair. Interacts with ARIH2 (via RING-type 2). Interacts with OTUB1; leading to inhibit E2-conjugating activity. Interacts with GPS2; leading to inhibit E2-conjugating activity. Interacts with RIGI and RNF135; involved in RIGI ubiquitination and activation. Conjugation to ISG15 impairs formation of the thioester bond with ubiquitin but not interaction with UBE2V2.

The catalysed reaction is S-ubiquitinyl-[E1 ubiquitin-activating enzyme]-L-cysteine + [E2 ubiquitin-conjugating enzyme]-L-cysteine = [E1 ubiquitin-activating enzyme]-L-cysteine + S-ubiquitinyl-[E2 ubiquitin-conjugating enzyme]-L-cysteine.. Its pathway is protein modification; protein ubiquitination. Its activity is regulated as follows. Activity is inhibited by binding to OTUB1, which prevents 'Lys-63'-linked polyubiquitination. Activity is inhibited by GPS2, leading to prevent 'Lys-63'-linked polyubiquitination. Its function is as follows. The UBE2V1-UBE2N and UBE2V2-UBE2N heterodimers catalyze the synthesis of non-canonical 'Lys-63'-linked polyubiquitin chains. This type of polyubiquitination does not lead to protein degradation by the proteasome. Mediates transcriptional activation of target genes. Plays a role in the control of progress through the cell cycle and differentiation. Plays a role in the error-free DNA repair pathway and contributes to the survival of cells after DNA damage. Acts together with the E3 ligases, HLTF and SHPRH, in the 'Lys-63'-linked poly-ubiquitination of PCNA upon genotoxic stress, which is required for DNA repair. Appears to act together with E3 ligase RNF5 in the 'Lys-63'-linked polyubiquitination of JKAMP thereby regulating JKAMP function by decreasing its association with components of the proteasome and ERAD. Promotes TRIM5 capsid-specific restriction activity and the UBE2V1-UBE2N heterodimer acts in concert with TRIM5 to generate 'Lys-63'-linked polyubiquitin chains which activate the MAP3K7/TAK1 complex which in turn results in the induction and expression of NF-kappa-B and MAPK-responsive inflammatory genes. Together with RNF135 and UB2V1, catalyzes the viral RNA-dependent 'Lys-63'-linked polyubiquitination of RIGI to activate the downstream signaling pathway that leads to interferon beta production. UBE2V1-UBE2N together with TRAF3IP2 E3 ubiquitin ligase mediate 'Lys-63'-linked polyubiquitination of TRAF6, a component of IL17A-mediated signaling pathway. This Bos taurus (Bovine) protein is Ubiquitin-conjugating enzyme E2 N (UBE2N).